Consider the following 585-residue polypeptide: Protein DENND6B (585 aa).

Low complexity predominate over residues 1 to 10 (MEVPVGPGPR). Residues 1–25 (MEVPVGPGPRQAGGGLGATRSSSSG) form a disordered region. The region spanning 43-221 (ECVCVVTFDL…IQVRIPSRVD (179 aa)) is the uDENN domain. The 128-residue stretch at 246-373 (VHELDLFRCF…VKLKKPSRLK (128 aa)) folds into the cDENN domain. Residues 375 to 499 (LDTKPGLYTS…KSPHFDGWYR (125 aa)) enclose the dDENN domain.

The protein belongs to the DENND6 family.

The protein localises to the recycling endosome. The protein resides in the cytoplasm. In terms of biological role, guanine nucleotide exchange factor (GEF) for RAB14. Also has some, lesser GEF activity towards RAB35. The chain is Protein DENND6B (Dennd6b) from Mus musculus (Mouse).